Reading from the N-terminus, the 158-residue chain is Ribosome maturation factor RimP (158 aa).

It belongs to the RimP family.

It localises to the cytoplasm. Functionally, required for maturation of 30S ribosomal subunits. In Streptococcus suis (strain 05ZYH33), this protein is Ribosome maturation factor RimP.